The primary structure comprises 558 residues: PE cleavage protein A (558 aa).

The PE domain occupies 1-93 (MSFLVVVPEF…SGSYAAAEAT (93 aa)). Residue aspartate 297 is part of the active site.

The protein belongs to the mycobacterial PE family. PGRS subfamily. In terms of processing, undergoes auto-proteolytic processing.

The protein resides in the secreted. Its subcellular location is the cell surface. Aspartic protease that processes the lipase LipY and other PE_PGRS proteins. Can also cleave itself. This Mycobacterium tuberculosis (strain CDC 1551 / Oshkosh) protein is PE cleavage protein A.